The following is a 213-amino-acid chain: Major fimbrial subunit (213 aa).

The signal sequence occupies residues 1–20; it reads MKKTLLGSLILLAFAGNVQA. A disulfide bond links Cys41 and Cys81.

It belongs to the fimbrial protein family.

The protein localises to the fimbrium. In terms of biological role, mediates adherence to oropharyngeal epithelial cells. Helps the airway colonization process. The chain is Major fimbrial subunit (hifA) from Haemophilus influenzae.